Here is a 267-residue protein sequence, read N- to C-terminus: Hydroxyethylthiazole kinase (267 aa).

Met44 contributes to the substrate binding site. Positions 120 and 166 each coordinate ATP. Gly193 provides a ligand contact to substrate.

Belongs to the Thz kinase family. It depends on Mg(2+) as a cofactor.

It catalyses the reaction 5-(2-hydroxyethyl)-4-methylthiazole + ATP = 4-methyl-5-(2-phosphooxyethyl)-thiazole + ADP + H(+). Its pathway is cofactor biosynthesis; thiamine diphosphate biosynthesis; 4-methyl-5-(2-phosphoethyl)-thiazole from 5-(2-hydroxyethyl)-4-methylthiazole: step 1/1. Catalyzes the phosphorylation of the hydroxyl group of 4-methyl-5-beta-hydroxyethylthiazole (THZ). In Desulfitobacterium hafniense (strain DSM 10664 / DCB-2), this protein is Hydroxyethylthiazole kinase.